Reading from the N-terminus, the 727-residue chain is Engulfment and cell motility protein 1 (727 aa).

Residue Tyr-18 is modified to Phosphotyrosine; by HCK. N6-acetyllysine occurs at positions 100 and 105. Tyr-216 is modified (phosphotyrosine; by HCK). The ELMO domain maps to 319-492; that stretch reads AQRDIIFELR…VVKEQVMRAL (174 aa). A Phosphoserine modification is found at Ser-344. Residues Tyr-395 and Tyr-511 each carry the phosphotyrosine; by HCK modification. In terms of domain architecture, PH spans 555 to 676; sequence RLVEGTCFRK…DGLNALLGKD (122 aa). The SH3-binding signature appears at 707–714; that stretch reads PDAPPPIP. Tyr-720 bears the Phosphotyrosine; by HCK mark.

In terms of assembly, interacts directly with the SH3-domain of DOCK1 via its SH3-binding site. Probably forms a heterotrimeric complex with DOCK1 and RAC1. Interacts with PLEKHG6. Interacts with HCK (via SH3 domain). Interacts with ADGRB1. Interacts with ADGRB3. Interacts with DOCK5. Post-translationally, phosphorylated by HCK.

The protein localises to the cytoplasm. The protein resides in the cell membrane. In terms of biological role, involved in cytoskeletal rearrangements required for phagocytosis of apoptotic cells and cell motility. Acts in association with DOCK1 and CRK. Was initially proposed to be required in complex with DOCK1 to activate Rac Rho small GTPases. May enhance the guanine nucleotide exchange factor (GEF) activity of DOCK1. This Mus musculus (Mouse) protein is Engulfment and cell motility protein 1 (Elmo1).